We begin with the raw amino-acid sequence, 345 residues long: Putative mediator of RNA polymerase II transcription subunit 7 (345 aa).

Composition is skewed to low complexity over residues 1 to 27 and 88 to 126; these read MNTSQQQQQQQQQQQQQQQQQQQTPQQ and NNNNNNNNNNNNNNNNNNNNNNNNNNNNNNNNNNNNNNN. 2 disordered regions span residues 1-130 and 292-315; these read MNTS…KATT and TPLPTNITSPTKNLMSPTKLNNSQ.

It belongs to the Mediator complex subunit 7 family. In terms of assembly, component of the Mediator complex.

It localises to the nucleus. Its function is as follows. Component of the Mediator complex, a coactivator involved in the regulated transcription of nearly all RNA polymerase II-dependent genes. Mediator functions as a bridge to convey information from gene-specific regulatory proteins to the basal RNA polymerase II transcription machinery. Mediator is recruited to promoters by direct interactions with regulatory proteins and serves as a scaffold for the assembly of a functional preinitiation complex with RNA polymerase II and the general transcription factors. This Dictyostelium discoideum (Social amoeba) protein is Putative mediator of RNA polymerase II transcription subunit 7 (med7).